The primary structure comprises 221 residues: DNA mismatch repair protein MutH (221 aa).

The protein belongs to the MutH family.

It is found in the cytoplasm. Sequence-specific endonuclease that cleaves unmethylated GATC sequences. It is involved in DNA mismatch repair. This is DNA mismatch repair protein MutH from Vibrio cholerae serotype O1 (strain ATCC 39315 / El Tor Inaba N16961).